The sequence spans 139 residues: Stress-related protein 1 (139 aa).

Polar residues predominate over residues 1-12; that stretch reads MTSESSTPTGST. The tract at residues 1–86 is disordered; that stretch reads MTSESSTPTG…AERPGSATTP (86 aa). Composition is skewed to low complexity over residues 14-53 and 60-74; these read ALPA…SLVV and SPVV…TRPR. S60 carries the phosphoserine modification.

Embryo.

Functionally, involved in drought, heat, cold, and/or salt tolerance. The sequence is that of Stress-related protein 1 (SRP1) from Zea mays (Maize).